Here is a 37-residue protein sequence, read N- to C-terminus: MKVRASVKEMCDKCRVIRRNGRVMVICTNPKHKQRQG.

The protein belongs to the bacterial ribosomal protein bL36 family.

The protein localises to the plastid. It localises to the organellar chromatophore. The sequence is that of Large ribosomal subunit protein bL36c from Paulinella chromatophora.